Reading from the N-terminus, the 215-residue chain is Probable transaldolase (215 aa).

The active-site Schiff-base intermediate with substrate is the lysine 83.

The protein belongs to the transaldolase family. Type 3B subfamily.

The protein localises to the cytoplasm. The enzyme catalyses D-sedoheptulose 7-phosphate + D-glyceraldehyde 3-phosphate = D-erythrose 4-phosphate + beta-D-fructose 6-phosphate. It participates in carbohydrate degradation; pentose phosphate pathway; D-glyceraldehyde 3-phosphate and beta-D-fructose 6-phosphate from D-ribose 5-phosphate and D-xylulose 5-phosphate (non-oxidative stage): step 2/3. Functionally, transaldolase is important for the balance of metabolites in the pentose-phosphate pathway. The chain is Probable transaldolase from Methanococcus maripaludis (strain C7 / ATCC BAA-1331).